We begin with the raw amino-acid sequence, 748 residues long: Acyl-coenzyme A oxidase (748 aa).

It belongs to the acyl-CoA oxidase family. FAD serves as cofactor.

The protein resides in the peroxisome. It carries out the reaction a 2,3-saturated acyl-CoA + O2 = a (2E)-enoyl-CoA + H2O2. It functions in the pathway lipid metabolism; peroxisomal fatty acid beta-oxidation. This is Acyl-coenzyme A oxidase (POX1) from Candida glabrata (strain ATCC 2001 / BCRC 20586 / JCM 3761 / NBRC 0622 / NRRL Y-65 / CBS 138) (Yeast).